A 427-amino-acid chain; its full sequence is Glutamate-1-semialdehyde 2,1-aminomutase (427 aa).

The residue at position 265 (Lys-265) is an N6-(pyridoxal phosphate)lysine.

The protein belongs to the class-III pyridoxal-phosphate-dependent aminotransferase family. HemL subfamily. In terms of assembly, homodimer. It depends on pyridoxal 5'-phosphate as a cofactor.

The protein resides in the cytoplasm. It catalyses the reaction (S)-4-amino-5-oxopentanoate = 5-aminolevulinate. The protein operates within porphyrin-containing compound metabolism; protoporphyrin-IX biosynthesis; 5-aminolevulinate from L-glutamyl-tRNA(Glu): step 2/2. In Burkholderia multivorans (strain ATCC 17616 / 249), this protein is Glutamate-1-semialdehyde 2,1-aminomutase.